We begin with the raw amino-acid sequence, 158 residues long: Small ribosomal subunit protein uS19 (158 aa).

It belongs to the universal ribosomal protein uS19 family.

Its function is as follows. Protein S19 forms a complex with S13 that binds strongly to the 16S ribosomal RNA. The polypeptide is Small ribosomal subunit protein uS19 (Pyrobaculum neutrophilum (strain DSM 2338 / JCM 9278 / NBRC 100436 / V24Sta) (Thermoproteus neutrophilus)).